A 210-amino-acid polypeptide reads, in one-letter code: Peroxiredoxin-5, mitochondrial (210 aa).

The N-terminal 48 residues, 1–48, are a transit peptide targeting the mitochondrion; it reads MLQLGLRVLGCKASSVLRASTCLAGRAGRKEAGWECGGARSFSSSAVT. The Thioredoxin domain maps to 52–210; the sequence is IKVGDAIPSV…SLAPNILSQL (159 aa). At Lys70 the chain carries N6-acetyllysine; alternate. Lys70 is subject to N6-succinyllysine; alternate. Lys71 bears the N6-acetyllysine mark. Residue Lys79 is modified to N6-acetyllysine; alternate. At Lys79 the chain carries N6-succinyllysine; alternate. Cys96 functions as the Cysteine sulfenic acid (-SOH) intermediate in the catalytic mechanism. A lipid anchor (S-palmitoyl cysteine) is attached at Cys96. Residues Cys96 and Cys200 are joined by a disulfide bond. Position 112 is an N6-succinyllysine (Lys112). Residues Ser167 and Ser178 each carry the phosphoserine modification. The Microbody targeting signal signature appears at 208 to 210; that stretch reads SQL.

This sequence belongs to the peroxiredoxin family. Prx5 subfamily. In terms of assembly, monomer. In terms of processing, S-palmitoylated. Palmitoylation occurs on the active site, inhibiting its reactivity; therefore PRDX5 palmitoylation status determines its antioxidant capacity. Post-translationally, S-palmitoylated. Depalmitoylated by ABHD10. As to expression, widely expressed.

It localises to the mitochondrion. It is found in the cytoplasm. The protein resides in the peroxisome matrix. It carries out the reaction a hydroperoxide + [thioredoxin]-dithiol = an alcohol + [thioredoxin]-disulfide + H2O. In terms of biological role, thiol-specific peroxidase that catalyzes the reduction of hydrogen peroxide and organic hydroperoxides to water and alcohols, respectively. Plays a role in cell protection against oxidative stress by detoxifying peroxides and as sensor of hydrogen peroxide-mediated signaling events. The chain is Peroxiredoxin-5, mitochondrial from Mus musculus (Mouse).